The following is a 185-amino-acid chain: HTH-type transcriptional regulator Hpr (185 aa).

Positions 13-157 (AMIFSQRIAQ…LIAILRNIYG (145 aa)) constitute an HTH marR-type domain. The segment at residues 63–86 (ISEIAKFGVMHVSTAFNFSKKLEE) is a DNA-binding region (H-T-H motif).

As to quaternary structure, homodimer.

Negative regulator of protease production and sporulation. The sequence is that of HTH-type transcriptional regulator Hpr from Bacillus cytotoxicus (strain DSM 22905 / CIP 110041 / 391-98 / NVH 391-98).